A 334-amino-acid chain; its full sequence is Trans-1,2-dihydrobenzene-1,2-diol dehydrogenase (334 aa).

Belongs to the Gfo/Idh/MocA family. As to quaternary structure, homodimer. Small intestine.

The enzyme catalyses (1R,2R)-1,2-dihydrobenzene-1,2-diol + NADP(+) = catechol + NADPH + H(+). It carries out the reaction D-xylose + NADP(+) = D-xylono-1,5-lactone + NADPH + H(+). The polypeptide is Trans-1,2-dihydrobenzene-1,2-diol dehydrogenase (DHDH) (Homo sapiens (Human)).